The following is a 226-amino-acid chain: MSFVNIRSSRGPVVKVCGLQSLKAAQCALDSDADLLGIICVPGRERTVDPVVAMEISALVRACRTSMSTPKYLVGVFRNQSKEDVLRIANDYGIDIVQLHGDEPWQEYQKFLGLPVIKRLVFPRDCDILLSTPSEKTHLFMPLFDSEAGGTGELLDWNSISDWFAEQGNPECLQFMLAGGLTPENVSDALQLHGVIGVDVSGGVETNGMKDMDKITNFVRNAKKES.

This sequence belongs to the TrpF family.

It carries out the reaction N-(5-phospho-beta-D-ribosyl)anthranilate = 1-(2-carboxyphenylamino)-1-deoxy-D-ribulose 5-phosphate. The protein operates within amino-acid biosynthesis; L-tryptophan biosynthesis; L-tryptophan from chorismate: step 3/5. The chain is N-(5'-phosphoribosyl)anthranilate isomerase (TRP1) from Saccharomyces kudriavzevii (strain ATCC MYA-4449 / AS 2.2408 / CBS 8840 / NBRC 1802 / NCYC 2889) (Yeast).